The primary structure comprises 76 residues: Spermatid nuclear transition protein 3 (76 aa).

Polar residues predominate over residues 1–11 (AKVTEKSWQPQ). Disordered stretches follow at residues 1–34 (AKVT…GKVR) and 56–76 (VITT…ETIP). The segment covering 16–34 (KRWKKRKTPSQPRSRGKVR) has biased composition (basic residues).

The protein localises to the nucleus. It localises to the chromosome. Its function is as follows. Involved in nuclear basic protein transition: histones are replaced by spermatid specific proteins which are themselves replaced by protamines in late spermatids. This Sus scrofa (Pig) protein is Spermatid nuclear transition protein 3 (TNP3).